The following is a 181-amino-acid chain: uncharacterized protein (181 aa).

This is an uncharacterized protein from Acidianus filamentous virus 2 (isolate Italy/Pozzuoli) (AFV-2).